The sequence spans 202 residues: Dephospho-CoA kinase (202 aa).

The DPCK domain maps to 3 to 202 (IFGLTGGIGS…ISHRSKYLSC (200 aa)). Position 11–16 (11–16 (GSGKSL)) interacts with ATP.

Belongs to the CoaE family.

Its subcellular location is the cytoplasm. It carries out the reaction 3'-dephospho-CoA + ATP = ADP + CoA + H(+). It participates in cofactor biosynthesis; coenzyme A biosynthesis; CoA from (R)-pantothenate: step 5/5. Functionally, catalyzes the phosphorylation of the 3'-hydroxyl group of dephosphocoenzyme A to form coenzyme A. In Ehrlichia chaffeensis (strain ATCC CRL-10679 / Arkansas), this protein is Dephospho-CoA kinase.